A 136-amino-acid polypeptide reads, in one-letter code: Large ribosomal subunit protein uL16 (136 aa).

This sequence belongs to the universal ribosomal protein uL16 family. As to quaternary structure, part of the 50S ribosomal subunit.

Functionally, binds 23S rRNA and is also seen to make contacts with the A and possibly P site tRNAs. The chain is Large ribosomal subunit protein uL16 from Edwardsiella ictaluri (strain 93-146).